The primary structure comprises 426 residues: Alpha-ionylideneethane synthase abl3 (426 aa).

It belongs to the alpha-ionylideneethane synthase family.

Its pathway is hormone biosynthesis. Functionally, alpha-ionylideneethane synthase; part of the gene cluster that mediates the biosynthesis of abscisic acid (ABA), a phytohormone that acts antagonistically toward salicylic acid (SA), jasmonic acid (JA) and ethylene (ETH) signaling, to impede plant defense responses. The first step of the pathway catalyzes the reaction from farnesyl diphosphate to alpha-ionylideneethane performed by the alpha-ionylideneethane synthase abl3 via a three-step reaction mechanism involving 2 neutral intermediates, beta-farnesene and allofarnesene. The cytochrome P450 monooxygenase abl1 might then be involved in the conversion of alpha-ionylideneethane to alpha-ionylideneacetic acid. Alpha-ionylideneacetic acid is further converted to abscisic acid in 2 steps involving the cytochrome P450 monooxygenase abl2 and the short-chain dehydrogenase/reductase abl4, via the intermediates 1'-deoxy-ABA or 1',4'-trans-diol-ABA, depending on the order of action of these 2 enzymes. Abl2 is responsible for the hydroxylation of carbon atom C-1' and abl4 might be involved in the oxidation of the C-4' carbon atom. The sequence is that of Alpha-ionylideneethane synthase abl3 from Leptosphaeria maculans (strain JN3 / isolate v23.1.3 / race Av1-4-5-6-7-8) (Blackleg fungus).